The sequence spans 134 residues: MARVTVEDCIDKVENRFELVLLASHRARLISQGASITIDRDNDKNPVVALREIADETLSPDDLKEDLIHSLQKHVEVDEPEPDPASMIAAGGVAAADGEEQDDVPETITFDQMSEEELLAGIEGLVPPEKSDDY.

This sequence belongs to the RNA polymerase subunit omega family. In terms of assembly, the RNAP catalytic core consists of 2 alpha, 1 beta, 1 beta' and 1 omega subunit. When a sigma factor is associated with the core the holoenzyme is formed, which can initiate transcription.

The catalysed reaction is RNA(n) + a ribonucleoside 5'-triphosphate = RNA(n+1) + diphosphate. In terms of biological role, promotes RNA polymerase assembly. Latches the N- and C-terminal regions of the beta' subunit thereby facilitating its interaction with the beta and alpha subunits. The chain is DNA-directed RNA polymerase subunit omega from Rhizobium johnstonii (strain DSM 114642 / LMG 32736 / 3841) (Rhizobium leguminosarum bv. viciae).